The primary structure comprises 692 residues: Glycine--tRNA ligase beta subunit (692 aa).

It belongs to the class-II aminoacyl-tRNA synthetase family. In terms of assembly, tetramer of two alpha and two beta subunits.

It localises to the cytoplasm. The catalysed reaction is tRNA(Gly) + glycine + ATP = glycyl-tRNA(Gly) + AMP + diphosphate. The protein is Glycine--tRNA ligase beta subunit of Alteromonas mediterranea (strain DSM 17117 / CIP 110805 / LMG 28347 / Deep ecotype).